Consider the following 410-residue polypeptide: Lipid droplet-regulating VLDL assembly factor AUP1 (410 aa).

Met-1 is subject to N-acetylmethionine. Residues 1–20 (MEPPPAPGPERLFDSHRLPS) are Cytoplasmic-facing. An intramembrane segment occupies 21 to 41 (DGFLLLALLLYAPVGLCLLVL). Residues 42 to 410 (RLFLGLHVFL…FRERQAQEAE (369 aa)) are Cytoplasmic-facing. The segment at 259 to 293 (LTPADKAEHMKRQRHPRLRPQSVQSSFPSPPSPSS) is disordered. Ser-292 is modified (phosphoserine). Residues 296-338 (QLTILAQRVKEVLPHVPLNVIQRDLARTGCVDLTITNLLEGAV) enclose the CUE domain. The segment at 348-367 (GSQSLPTASAPKFPSSGLVT) is disordered. Ser-363 is subject to Phosphoserine. Residue Thr-367 is modified to Phosphothreonine.

This sequence belongs to the AUP1 family. As to quaternary structure, identified in a complex that contains SEL1L, OS9, FAF2/UBXD8, UBE2J1/UBC6E and AUP1. Interacts with the cytoplasmic tail of ITGA2B, ITGA1, ITGA2, ITGA5, ITGAV and ITGAM. Interacts (via C-terminus) with UBE2G2; the interaction recruits UBE2G2 to lipid droplets. Interacts with ubiquitin ligases AMFR/gp78 and RNF139/TRC8; this promotes interaction of UBE2G2 with AMFR and RNF139. Interacts with apolipoprotein APOB. Monoubiquitinated and diubiquitinated.

Its subcellular location is the endoplasmic reticulum membrane. It localises to the lipid droplet. In terms of biological role, plays a role in the translocation of terminally misfolded proteins from the endoplasmic reticulum lumen to the cytoplasm and their degradation by the proteasome. Plays a role in lipid droplet formation. Induces lipid droplet clustering. Recruits ubiquitin-conjugating enzyme UBE2G2 to lipid droplets which facilitates its interaction with ubiquitin ligases AMFR/gp78 and RNF139/TRC8, leading to sterol-induced ubiquitination of HMGCR and its subsequent proteasomal degradation. Also required for the degradation of INSIG1, SREBF1 and SREBF2. Plays a role in regulating assembly and secretion of very low density lipoprotein particles and stability of apolipoprotein APOB. This is Lipid droplet-regulating VLDL assembly factor AUP1 from Rattus norvegicus (Rat).